A 260-amino-acid chain; its full sequence is Transcription factor MYB4 (260 aa).

HTH myb-type domains lie at 12-64 and 65-119; these read AVEV…LNYL and RPGI…SKRS. 2 DNA-binding regions (H-T-H motif) span residues 40 to 64 and 92 to 115; these read WRMLPAKAGLKRCGKSCRLRWLNYL and WSIIAGRIPGRTDNEIKNHWNTHL.

Its subcellular location is the nucleus. Functionally, transcription activator involved in the spatiotemporal regulation of flavonoid biosynthesis specifically in the corms of Montbretia. Activates the promoters of enzymes involved in the biosynthesis of the flavonol myricetin and the flavonol-glycoside montbretin A (MbA). MbA is a potent inhibitor of human pancreatic alpha-amylase and is being developed as drug candidate to treat type-2 diabetes. In Crocosmia x crocosmiiflora (Montbretia), this protein is Transcription factor MYB4.